The primary structure comprises 163 residues: Ribonuclease H (163 aa).

The RNase H type-1 domain maps to 16-157 (TTSPVEIYCD…CDSLARQAIT (142 aa)). Residues aspartate 25, glutamate 63, aspartate 85, and aspartate 149 each coordinate Mg(2+).

It belongs to the RNase H family. As to quaternary structure, monomer. Requires Mg(2+) as cofactor.

It localises to the cytoplasm. It carries out the reaction Endonucleolytic cleavage to 5'-phosphomonoester.. Endonuclease that specifically degrades the RNA of RNA-DNA hybrids. This chain is Ribonuclease H, found in Pelobacter propionicus (strain DSM 2379 / NBRC 103807 / OttBd1).